Consider the following 197-residue polypeptide: Glycerol-3-phosphate acyltransferase (197 aa).

4 helical membrane-spanning segments follow: residues 1–21 (MNFLLLLLAAYALGSTPFAIV), 78–98 (PVEAALAGLAAFLGHVFSVFL), 112–132 (VLAGINAWVALSALFVWLAVA), and 155–175 (VLLGATPTVAVLALIAGILVW).

This sequence belongs to the PlsY family. Probably interacts with PlsX.

The protein localises to the cell inner membrane. The enzyme catalyses an acyl phosphate + sn-glycerol 3-phosphate = a 1-acyl-sn-glycero-3-phosphate + phosphate. It functions in the pathway lipid metabolism; phospholipid metabolism. Its function is as follows. Catalyzes the transfer of an acyl group from acyl-phosphate (acyl-PO(4)) to glycerol-3-phosphate (G3P) to form lysophosphatidic acid (LPA). This enzyme utilizes acyl-phosphate as fatty acyl donor, but not acyl-CoA or acyl-ACP. This Aromatoleum aromaticum (strain DSM 19018 / LMG 30748 / EbN1) (Azoarcus sp. (strain EbN1)) protein is Glycerol-3-phosphate acyltransferase.